Reading from the N-terminus, the 74-residue chain is NADH dehydrogenase [ubiquinone] 1 alpha subcomplex assembly factor 8 (74 aa).

The CHCH domain occupies 22–69; that stretch reads LAACGAEASAYGKCVQASTAPGGRLSKDLCVREFEALRSCFAAAAKKT. 2 short sequence motifs (cx9C motif) span residues 25–35 and 51–61; these read CGAEASAYGKC and CVREFEALRSC. 2 cysteine pairs are disulfide-bonded: Cys-25–Cys-61 and Cys-35–Cys-51.

In terms of assembly, interacts with NDUFAF5.

Its subcellular location is the mitochondrion. Involved in the assembly of mitochondrial NADH:ubiquinone oxidoreductase complex (complex I, MT-ND1). Required to stabilize NDUFAF5. The protein is NADH dehydrogenase [ubiquinone] 1 alpha subcomplex assembly factor 8 of Mus musculus (Mouse).